Reading from the N-terminus, the 369-residue chain is MSLLDVLANQHAAMMPEEYKHRSVDEMEQRVVDIKRAFGSKLFIPGHHYQKDEVIQFADATGDSLQLAQIAADNKEAEYIVFCGVHFMAETADMLSKKNQKVLLPDMRAGCSMADMANMKQTDRAWEQLTDLFGETILPLTYVNSTADIKAFVGKHGGATVTSSNAKKMLEWALTQKERILFLPDQHLGRNTAFDLGISLEEMAVWDQIEERLITDQPLSRIKMILWKGHCSVHEKFTVRNIEETRKRDRDIQILVHPECTHEVVTASDLAGSTKFIIDTIKEAPAGSKWAIGTEMNLVKRIINQHPDKQIESLNPDMCPCLTMNRIDLPHLLWSLESIEKGDPVGFIQVNEDTTKDALLALNKMLIIK.

Iminosuccinate-binding residues include histidine 47 and serine 64. Residue cysteine 111 coordinates [4Fe-4S] cluster. Iminosuccinate-binding positions include 142–144 and serine 163; that span reads YVN. Cysteine 231 is a [4Fe-4S] cluster binding site. Residues 257–259 and threonine 274 each bind iminosuccinate; that span reads HPE. Cysteine 321 contacts [4Fe-4S] cluster.

The protein belongs to the quinolinate synthase family. Type 3 subfamily. Requires [4Fe-4S] cluster as cofactor.

It localises to the cytoplasm. The catalysed reaction is iminosuccinate + dihydroxyacetone phosphate = quinolinate + phosphate + 2 H2O + H(+). The protein operates within cofactor biosynthesis; NAD(+) biosynthesis; quinolinate from iminoaspartate: step 1/1. In terms of biological role, catalyzes the condensation of iminoaspartate with dihydroxyacetone phosphate to form quinolinate. This is Quinolinate synthase from Bacillus pumilus (strain SAFR-032).